We begin with the raw amino-acid sequence, 73 residues long: Large ribosomal subunit protein bL31 (73 aa).

The protein belongs to the bacterial ribosomal protein bL31 family. Type A subfamily. In terms of assembly, part of the 50S ribosomal subunit.

Its function is as follows. Binds the 23S rRNA. This chain is Large ribosomal subunit protein bL31, found in Cereibacter sphaeroides (strain ATCC 17029 / ATH 2.4.9) (Rhodobacter sphaeroides).